The sequence spans 529 residues: Peptide chain release factor 3 (529 aa).

A tr-type G domain is found at 11–280 (AKRRTFAIIS…GLVAWAPAPM (270 aa)). GTP is bound by residues 20 to 27 (SHPDAGKT), 88 to 92 (DTPGH), and 142 to 145 (NKLD).

The protein belongs to the TRAFAC class translation factor GTPase superfamily. Classic translation factor GTPase family. PrfC subfamily.

Its subcellular location is the cytoplasm. Functionally, increases the formation of ribosomal termination complexes and stimulates activities of RF-1 and RF-2. It binds guanine nucleotides and has strong preference for UGA stop codons. It may interact directly with the ribosome. The stimulation of RF-1 and RF-2 is significantly reduced by GTP and GDP, but not by GMP. The protein is Peptide chain release factor 3 (prfC) of Salmonella typhi.